A 513-amino-acid chain; its full sequence is Putative BTB/POZ domain-containing protein L55 (513 aa).

The BTB domain occupies 11–83; it reads SPIKIILQDI…FHGYKMEISD (73 aa).

Belongs to the mimivirus BTB/WD family.

The sequence is that of Putative BTB/POZ domain-containing protein L55 from Acanthamoeba polyphaga (Amoeba).